A 434-amino-acid chain; its full sequence is UDP-N-acetylglucosamine 1-carboxyvinyltransferase (434 aa).

22 to 23 is a phosphoenolpyruvate binding site; the sequence is KN. UDP-N-acetyl-alpha-D-glucosamine is bound at residue arginine 97. Catalysis depends on aspartate 121, which acts as the Proton donor. UDP-N-acetyl-alpha-D-glucosamine contacts are provided by aspartate 319 and methionine 341.

The protein belongs to the EPSP synthase family. MurA subfamily.

It is found in the cytoplasm. The enzyme catalyses phosphoenolpyruvate + UDP-N-acetyl-alpha-D-glucosamine = UDP-N-acetyl-3-O-(1-carboxyvinyl)-alpha-D-glucosamine + phosphate. It functions in the pathway cell wall biogenesis; peptidoglycan biosynthesis. Cell wall formation. Adds enolpyruvyl to UDP-N-acetylglucosamine. In Porphyromonas gingivalis (strain ATCC BAA-308 / W83), this protein is UDP-N-acetylglucosamine 1-carboxyvinyltransferase.